We begin with the raw amino-acid sequence, 571 residues long: Protein dead ringer homolog (571 aa).

Disordered regions lie at residues 45–117 (QHQQ…EPDK) and 190–229 (KRMQQDHNIQQSTNHIPTPSSASSHTSSGSVTSQTNSCNG). Residues 49 to 77 (RMMEQHKNDDVISNDVRCDDFSDGGERQR) are compositionally biased toward basic and acidic residues. Polar residues predominate over residues 195 to 206 (DHNIQQSTNHIP). Positions 207–224 (TPSSASSHTSSGSVTSQT) are enriched in low complexity. The 93-residue stretch at 249-341 (DIKRKEFLDD…YLYPFECERE (93 aa)) folds into the ARID domain. The span at 459–471 (AAHHAAQQAAQHQ) shows a compositional bias: low complexity. Positions 459–528 (AAHHAAQQAA…GDRGRHNEMS (70 aa)) are disordered. The 86-residue stretch at 473–558 (SLKKEIDSDY…GVLFAHSPNH (86 aa)) folds into the REKLES domain. Basic and acidic residues-rich tracts occupy residues 487–507 (PPEKKLSFDDSVRRLTPDNQR) and 518–527 (MGDRGRHNEM).

Its subcellular location is the nucleus. Functionally, transcription factor. The sequence is that of Protein dead ringer homolog (Ci-DRIL1/2) from Ciona intestinalis (Transparent sea squirt).